Reading from the N-terminus, the 220-residue chain is Putative NAD(P)H nitroreductase (220 aa).

155 to 160 lines the NAD(+) pocket; it reads GASALG.

This sequence belongs to the nitroreductase family. Requires FMN as cofactor.

This chain is Putative NAD(P)H nitroreductase, found in Haemophilus influenzae (strain ATCC 51907 / DSM 11121 / KW20 / Rd).